Consider the following 1242-residue polypeptide: Reverse gyrase 1 (1242 aa).

The RG N-terminal-type zinc finger occupies 6 to 46 (KVPPSIYTRSCPNCGGNISSQRLFNGSVCESCLKDDREFSN). Positions 16, 19, 34, and 37 each coordinate Zn(2+). Residues Q93 and 110-117 (APPGLGKT) each bind ATP. The Helicase ATP-binding domain occupies 97–298 (TIRFLRGESF…SLMGFRPGSS (202 aa)). The short motif at 214 to 217 (DDVD) is the DEAD box element. The interval 615-1242 (LSVKTTLFIV…ELYNEIQTIS (628 aa)) is topoisomerase I. Residues 619-785 (TTLFIVESPN…NIKRAEFHEV (167 aa)) enclose the Toprim domain. E625 is a binding site for Mg(2+). An RG C-terminal-type; atypical zinc finger spans residues 703 to 731 (IKKCEKGHQIVKDLSQNKCPICGSRIVTD). Zn(2+) contacts are provided by C706, H710, C721, and C724. D754 provides a ligand contact to Mg(2+). The 442-residue stretch at 801-1242 (NDNLVKSQIV…ELYNEIQTIS (442 aa)) folds into the Topo IA-type catalytic domain. Catalysis depends on Y965, which acts as the O-(5'-phospho-DNA)-tyrosine intermediate.

This sequence in the N-terminal section; belongs to the DEAD box helicase family. DDVD subfamily. The protein in the C-terminal section; belongs to the type IA topoisomerase family. In terms of assembly, monomer. Requires Zn(2+) as cofactor. The cofactor is Mg(2+).

Its subcellular location is the cytoplasm. It catalyses the reaction ATP + H2O = ADP + phosphate + H(+). With respect to regulation, at least one of the two reverse gyrase proteins is inhibited by actinomycin D. Highly sensitive to NaCl concentrations, maximal positive supercoiling is observed with 10 mM NaCl; as NaCl rises, supercoiling decreases. At 300 mM NaCl relaxes but does not introduce positive supercoils into negatively supercoiled substrate, at 400 mM NaCl does not relax DNA. Modifies the topological state of DNA by introducing positive supercoils in an ATP-dependent process. Increases the linking number in steps of +1. Involved in homeostatic control of DNA topology in balance with type II topoisomerase 6 (TopoVI); levels of TopoVI are constant at 80 and 88 degrees Celsius and TopoVI is probably less active at 88 degrees (characterized enzyme is from S.shibatae B12), so reverse gyrase mediates most of the fine-tuning of DNA topology. Changes the DNA linking number step-by-step in a distributive manner. At low protein to DNA ratios mostly relaxes negatively supercoiled substrate, as ratios rise more positive supercoils are introduced. At 90 degrees Celsius introduces 19 positive supercoils into pTZ18R DNA (probably 2860 bp), less than TopR2. Relaxes negatively supercoiled DNA in the absence of ATP. It cleaves transiently a single DNA strand and remains covalently bound to the 5' DNA end through a tyrosine residue. May be involved in DNA damage response. Its activity is inhibited by the DNA-binding protein 7d (Sso7d), suggesting that the Sso7d activity might counteract the overwinding effect of reverse gyrase. Its function is as follows. Resolves 4-way Holliday junctions (HJ) with 20 bases in each arm in vitro, distorting the junction. Very high protein levels are required, but total enzyme content of the cell (there are 2 reverse gyrases in this organism) is estimated to be 20-200 molecules/cell. HJ resolution does not require either ATPase activity or the active tyrosine. The individual domains do not resolve HJs but do so when mixed. Also unwinds a fork substrate. In terms of biological role, there are 2 genes for this protein in the cell. During exponential growth this is the less expressed isoform (about 52 molecules per cell at 80 degrees Celsius, about 28 molecules at 88 degrees Celsius); this isoform is more active at higher temperature. Grows actively at both 80 and 88 degrees Celsius; survives a long exposure at 45 degrees Celsius without DNA replication or cell division occurring. Experiments using whole cell extracts do not distinguish which isoform is present, the results are probably a mixture of the two forms. The chain is Reverse gyrase 1 from Saccharolobus solfataricus (strain ATCC 35092 / DSM 1617 / JCM 11322 / P2) (Sulfolobus solfataricus).